A 311-amino-acid polypeptide reads, in one-letter code: Ribonuclease 3 (311 aa).

The 126-residue stretch at 20–145 (YLCFYRILGF…FIGAIYLDQG (126 aa)) folds into the RNase III domain. Glutamate 62 is a binding site for Mg(2+). The active site involves aspartate 66. Residues asparagine 131 and glutamate 134 each contribute to the Mg(2+) site. Glutamate 134 is an active-site residue. Residues 173–242 (NFKSKLIEWS…AQMAIKKVKD (70 aa)) form the DRBM domain. Positions 250–311 (NEAKSQHSKP…EVEATETEKE (62 aa)) are disordered. The span at 262 to 288 (VETESVEPELTESETMEPDTLETEAPE) shows a compositional bias: acidic residues.

It belongs to the ribonuclease III family. As to quaternary structure, homodimer. It depends on Mg(2+) as a cofactor.

Its subcellular location is the cytoplasm. It catalyses the reaction Endonucleolytic cleavage to 5'-phosphomonoester.. Its function is as follows. Digests double-stranded RNA. Involved in the processing of primary rRNA transcript to yield the immediate precursors to the large and small rRNAs (23S and 16S). Processes some mRNAs, and tRNAs when they are encoded in the rRNA operon. Processes pre-crRNA and tracrRNA of type II CRISPR loci if present in the organism. In Bacteroides thetaiotaomicron (strain ATCC 29148 / DSM 2079 / JCM 5827 / CCUG 10774 / NCTC 10582 / VPI-5482 / E50), this protein is Ribonuclease 3.